Consider the following 78-residue polypeptide: Nucleocapsid VP1 (78 aa).

Homodimer.

Its subcellular location is the virion. Its function is as follows. Completely wraps the viral circular dsDNA genome to form a nucleoprotein filament. These interactions between the viral genome and the nucleocapsid proteins probably maintain the DNA in A-form. This certainly protects the viral DNA under conditions such as the extreme desiccation of its host. The protein is Nucleocapsid VP1 of Sulfolobus (SPV1).